Here is an 89-residue protein sequence, read N- to C-terminus: Cell division topological specificity factor (89 aa).

It belongs to the MinE family.

Prevents the cell division inhibition by proteins MinC and MinD at internal division sites while permitting inhibition at polar sites. This ensures cell division at the proper site by restricting the formation of a division septum at the midpoint of the long axis of the cell. This is Cell division topological specificity factor from Janthinobacterium sp. (strain Marseille) (Minibacterium massiliensis).